We begin with the raw amino-acid sequence, 698 residues long: 4-hydroxybutyrate--CoA ligase [ADP-forming] (698 aa).

The region spanning 491–544 (QEVLKAYGLPLPKSTLAKNEAEAVKAAKKIGYPVVMKIASPQIIHKSDAGGVKV) is the ATP-grasp domain. 517 to 544 (AKKIGYPVVMKIASPQIIHKSDAGGVKV) is a binding site for ATP.

It in the N-terminal section; belongs to the acetate CoA ligase alpha subunit family. In the C-terminal section; belongs to the acetate CoA ligase beta subunit family. Mg(2+) serves as cofactor. It depends on Mn(2+) as a cofactor.

The enzyme catalyses 4-hydroxybutanoate + ATP + CoA = 4-hydroxybutanoyl-CoA + ADP + phosphate. Its function is as follows. Involved in thaumarchaeal hydroxypropionate/hydroxybutyrate (HP/HB) cycle, a modified version of the autotrophic HP/HB cycle of Crenarchaeota. Catalyzes the formation of 4-hydroxybutyryl-CoA, ADP and phosphate from 4-hydroxybutyrate, coenzyme A (CoA) and ATP. Can also use acetate, propionate and butyrate, with poor catalytic efficiency. The sequence is that of 4-hydroxybutyrate--CoA ligase [ADP-forming] from Nitrosopumilus maritimus (strain SCM1).